A 399-amino-acid chain; its full sequence is MSNKLVLVLNCGSSSLKFAVIDAQTGDDQISGLAECFGLEDSRIKWKINGEKHESSLGAFTAHREAVEFIVNKILAGQPELAAQIQAVGHRIVHGGEKFTRSVIIDEHVIKGIEECSSLAPLHNPAHLIGIRAAIASFPKLPQVAVFDTAFHQSMPERAFIYALPYKLYREHGIRRYGMHGTSHLFVSREAAKVLNKPLEETNVICAHLGNGASVTAVKGGKSVDTSMGLTPLEGLVMGTRCGDLDPSIIYHLVHQLGYTLEEVNNLMNKQSGLLGISELTNDCRGIEEGYADGHKGATLALEIFCYRLAKYIASYTVPLGRLDAVVFTGGIGENSDIIREKVLNMLQIFNFHVDSERNKAARFGKKGIITTDNSTVAMVIPTNEEWVIAEDSIKLITK.

Residue Asn-10 participates in Mg(2+) binding. Residue Lys-17 coordinates ATP. Arg-91 is a binding site for substrate. Asp-148 functions as the Proton donor/acceptor in the catalytic mechanism. Residues 208–212 (HLGNG), 283–285 (DCR), and 331–335 (GIGEN) each bind ATP. Mg(2+) is bound at residue Glu-385.

Belongs to the acetokinase family. In terms of assembly, homodimer. It depends on Mg(2+) as a cofactor. Mn(2+) serves as cofactor.

It localises to the cytoplasm. It catalyses the reaction acetate + ATP = acetyl phosphate + ADP. It functions in the pathway metabolic intermediate biosynthesis; acetyl-CoA biosynthesis; acetyl-CoA from acetate: step 1/2. In terms of biological role, catalyzes the formation of acetyl phosphate from acetate and ATP. Can also catalyze the reverse reaction. In Shewanella sp. (strain MR-4), this protein is Acetate kinase.